Consider the following 118-residue polypeptide: Fluoride-specific ion channel FluC 1 (118 aa).

4 helical membrane-spanning segments follow: residues 5–25, 34–54, 56–76, and 98–118; these read FVLV…ISVL, FPFA…FLVS, ALGP…YTTF, and YLGC…MLGV. Gly-71 and Thr-74 together coordinate Na(+).

It belongs to the fluoride channel Fluc/FEX (TC 1.A.43) family.

The protein localises to the cell membrane. The catalysed reaction is fluoride(in) = fluoride(out). Na(+) is not transported, but it plays an essential structural role and its presence is essential for fluoride channel function. Functionally, fluoride-specific ion channel. Important for reducing fluoride concentration in the cell, thus reducing its toxicity. The polypeptide is Fluoride-specific ion channel FluC 1 (Listeria monocytogenes serotype 4b (strain F2365)).